A 68-amino-acid polypeptide reads, in one-letter code: DNA-directed RNA polymerase subunit Rpo10 (68 aa).

Residues cysteine 7, cysteine 10, cysteine 44, and cysteine 45 each contribute to the Zn(2+) site.

Belongs to the archaeal Rpo10/eukaryotic RPB10 RNA polymerase subunit family. As to quaternary structure, part of the RNA polymerase complex. Zn(2+) is required as a cofactor.

It localises to the cytoplasm. The catalysed reaction is RNA(n) + a ribonucleoside 5'-triphosphate = RNA(n+1) + diphosphate. In terms of biological role, DNA-dependent RNA polymerase (RNAP) catalyzes the transcription of DNA into RNA using the four ribonucleoside triphosphates as substrates. This is DNA-directed RNA polymerase subunit Rpo10 from Methanococcus maripaludis (strain C5 / ATCC BAA-1333).